The sequence spans 65 residues: Large ribosomal subunit protein bL35 (65 aa).

2 disordered regions span residues methionine 1 to lysine 23 and methionine 36 to alanine 65. Positions aspartate 54–alanine 65 are enriched in polar residues.

Belongs to the bacterial ribosomal protein bL35 family.

The sequence is that of Large ribosomal subunit protein bL35 from Francisella tularensis subsp. tularensis (strain FSC 198).